A 363-amino-acid chain; its full sequence is Protein-arginine kinase (363 aa).

A Phosphagen kinase C-terminal domain is found at 24–255; that stretch reads IVLSSRIRLA…QQLIAQERAA (232 aa). ATP-binding positions include 27 to 31, His92, Arg126, 177 to 181, and 208 to 213; these read SSRIR, RASVM, and RGTYGE. Positions 338–343 match the RDXXRA motif of the pArg binding pocket involved in allosteric regulation motif; it reads RDVRRA.

It belongs to the ATP:guanido phosphotransferase family.

The enzyme catalyses L-arginyl-[protein] + ATP = N(omega)-phospho-L-arginyl-[protein] + ADP + H(+). Appears to be allosterically activated by the binding of pArg-containing polypeptides to the pArg-binding pocket localized in the C-terminal domain of McsB. Its function is as follows. Catalyzes the specific phosphorylation of arginine residues in a large number of proteins. Is part of the bacterial stress response system. Protein arginine phosphorylation has a physiologically important role and is involved in the regulation of many critical cellular processes, such as protein homeostasis, motility, competence, and stringent and stress responses, by regulating gene expression and protein activity. The protein is Protein-arginine kinase of Geobacillus kaustophilus (strain HTA426).